The sequence spans 142 residues: Metallothiol transferase FosB (142 aa).

A VOC domain is found at 5–120 (NVNHICFSVS…DGHKIELHTG (116 aa)). The Mg(2+) site is built by H8, H67, and E116. E116 serves as the catalytic Proton donor/acceptor.

This sequence belongs to the fosfomycin resistance protein family. FosB subfamily. In terms of assembly, homodimer. The cofactor is Mg(2+).

It localises to the cytoplasm. Functionally, metallothiol transferase which confers resistance to fosfomycin by catalyzing the addition of a thiol cofactor to fosfomycin. L-cysteine is probably the physiological thiol donor. This chain is Metallothiol transferase FosB, found in Staphylococcus epidermidis (strain ATCC 35984 / DSM 28319 / BCRC 17069 / CCUG 31568 / BM 3577 / RP62A).